Consider the following 232-residue polypeptide: MTNADPHELQKFSDLAHRWWDPNAEFKPLHELNPVRLGWIDAHAHLAGKRALDIGCGGGILSESMAGLGAQVKGIDLSTEALGVADLHSLESGVTVDYEAIAAEALAEREPGTYDVVTCMEMLEHVPSPAGIVSACATLVKPGGWVFFSTLNRNLKSYLFAVIGAEYIARMLPKGTHDYARFIRPSELASFVRGTDLHIVEIKGITYHPIGKRFALSNDTDINYLVACRRGA.

S-adenosyl-L-methionine-binding residues include arginine 36, glycine 55, aspartate 76, and methionine 120.

This sequence belongs to the methyltransferase superfamily. UbiG/COQ3 family.

The catalysed reaction is a 3-demethylubiquinol + S-adenosyl-L-methionine = a ubiquinol + S-adenosyl-L-homocysteine + H(+). It catalyses the reaction a 3-(all-trans-polyprenyl)benzene-1,2-diol + S-adenosyl-L-methionine = a 2-methoxy-6-(all-trans-polyprenyl)phenol + S-adenosyl-L-homocysteine + H(+). The protein operates within cofactor biosynthesis; ubiquinone biosynthesis. In terms of biological role, O-methyltransferase that catalyzes the 2 O-methylation steps in the ubiquinone biosynthetic pathway. In Burkholderia ambifaria (strain MC40-6), this protein is Ubiquinone biosynthesis O-methyltransferase.